The sequence spans 89 residues: Cell division topological specificity factor (89 aa).

The protein belongs to the MinE family.

In terms of biological role, prevents the cell division inhibition by proteins MinC and MinD at internal division sites while permitting inhibition at polar sites. This ensures cell division at the proper site by restricting the formation of a division septum at the midpoint of the long axis of the cell. The sequence is that of Cell division topological specificity factor from Legionella pneumophila (strain Paris).